The primary structure comprises 176 residues: Large ribosomal subunit protein uL10 (176 aa).

Belongs to the universal ribosomal protein uL10 family. Part of the ribosomal stalk of the 50S ribosomal subunit. The N-terminus interacts with L11 and the large rRNA to form the base of the stalk. The C-terminus forms an elongated spine to which L12 dimers bind in a sequential fashion forming a multimeric L10(L12)X complex.

In terms of biological role, forms part of the ribosomal stalk, playing a central role in the interaction of the ribosome with GTP-bound translation factors. This Alcanivorax borkumensis (strain ATCC 700651 / DSM 11573 / NCIMB 13689 / SK2) protein is Large ribosomal subunit protein uL10.